The primary structure comprises 202 residues: Large ribosomal subunit protein bL9 (202 aa).

Residues 176–202 (AAGEFFDPDAQHDDEPAAEDDQNAEEK) form a disordered region. Positions 191 to 202 (PAAEDDQNAEEK) are enriched in acidic residues.

This sequence belongs to the bacterial ribosomal protein bL9 family.

Its function is as follows. Binds to the 23S rRNA. The protein is Large ribosomal subunit protein bL9 of Nitrobacter winogradskyi (strain ATCC 25391 / DSM 10237 / CIP 104748 / NCIMB 11846 / Nb-255).